The chain runs to 530 residues: GMP synthase [glutamine-hydrolyzing] (530 aa).

Residues 4-205 enclose the Glutamine amidotransferase type-1 domain; it reads RILILDYGSQ…VKDICGCEGD (202 aa). The active-site Nucleophile is the Cys84. Active-site residues include His179 and Glu181. In terms of domain architecture, GMPS ATP-PPase spans 206–398; sequence WNMPDYISEA…LGLPPQMVYR (193 aa). 233-239 serves as a coordination point for ATP; that stretch reads SGGVDSS.

Homodimer.

It carries out the reaction XMP + L-glutamine + ATP + H2O = GMP + L-glutamate + AMP + diphosphate + 2 H(+). Its pathway is purine metabolism; GMP biosynthesis; GMP from XMP (L-Gln route): step 1/1. Functionally, catalyzes the synthesis of GMP from XMP. This Bordetella bronchiseptica (strain ATCC BAA-588 / NCTC 13252 / RB50) (Alcaligenes bronchisepticus) protein is GMP synthase [glutamine-hydrolyzing].